Here is a 1285-residue protein sequence, read N- to C-terminus: Ataxin-2 (1285 aa).

Disordered regions lie at residues 1-85 (MRSS…PGSR), 111-178 (ARAC…SPGA), and 197-224 (PVASSSAAAGGGRPGLGRGRNSSKGLPQ). A compositionally biased stretch (basic residues) spans 29-38 (SLPRTARRGG). Over residues 48–65 (AGPPPRGPGAPPRGPRSP) the composition is skewed to pro residues. A compositionally biased stretch (low complexity) spans 128 to 144 (SSSARPAPGCPRPACEP). The segment covering 205 to 214 (AGGGRPGLGR) has biased composition (gly residues). Phosphoserine occurs at positions 218 and 219. Positions 237-314 (RMVHILTSVV…FVVVQFKDTD (78 aa)) constitute a Sm domain. A phosphoserine mark is found at Ser362 and Ser435. 2 stretches are compositionally biased toward basic and acidic residues: residues 428-440 (ALENDDRSEEEKY) and 447-461 (CSDREGHGPNTRDNK). Disordered stretches follow at residues 428-925 (ALEN…HQQP) and 1111-1191 (AALH…QSSF). Ser477 is modified (phosphoserine). Residues 498–510 (ASHTSDFNPNAGS) show a composition bias toward polar residues. The residue at position 523 (Ser523) is a Phosphoserine. A compositionally biased stretch (low complexity) spans 526-552 (PSHSSRPPSRYQSGPNSLPPRAATHTR). A compositionally biased stretch (pro residues) spans 554–567 (PSRPPSRPSRPPSH). At Ser593 the chain carries Phosphoserine. The span at 596–606 (AQRHPRNHRVS) shows a compositional bias: basic residues. At Arg609 the chain carries Asymmetric dimethylarginine; alternate. At Arg609 the chain carries Omega-N-methylarginine; alternate. 2 positions are modified to phosphoserine: Ser611 and Ser653. The segment covering 662–672 (PRQSSIGNSPS) has biased composition (polar residues). Over residues 685 to 694 (PAEAVSMPVP) the composition is skewed to low complexity. Ser697 bears the Phosphoserine mark. A Phosphothreonine modification is found at Thr710. Residues 737–746 (ASETSPSFSK) are compositionally biased toward polar residues. Residues Ser741 and Ser753 each carry the phosphoserine modification. Over residues 757–773 (SEHRKQIDDLKKFKNDF) the composition is skewed to basic and acidic residues. Polar residues predominate over residues 776–789 (QPSSTSESMDQLLS). The span at 790–813 (KNREGEKSRDLIKDKTEASAKDSF) shows a compositional bias: basic and acidic residues. A compositionally biased stretch (low complexity) spans 814–838 (IDSSSSSSNCTSGSSKTNSPSISPS). Residues Ser827, Ser828, Ser832, Ser836, Ser838, Ser859, and Ser860 each carry the phosphoserine modification. The span at 851–862 (VTSQGVQTSSPA) shows a compositional bias: polar residues. Lys864 participates in a covalent cross-link: Glycyl lysine isopeptide (Lys-Gly) (interchain with G-Cter in SUMO2). Over residues 864 to 881 (KQEKDDREEKKDTTEQVR) the composition is skewed to basic and acidic residues. 2 stretches are compositionally biased toward low complexity: residues 896-907 (SFSQPKPSTTPT) and 1128-1165 (GQQQSQHGGSHPAPSPVQHHQHQAAQALHLASPQQQSA).

It belongs to the ataxin-2 family. As to quaternary structure, interacts with RBFOX1. Monomer. Can also form homodimers. Interacts with polyribosomes. Interacts with EGFR. Interacts with SH3GL3. Interacts with SH3GL2, SH3KBP1 and CBL. Interacts with ATXN2L. Expressed in the heart, lung, liver, kidney, skeletal muscle, spleen and intestine. Predominant expression was seen in the brain where a high level expression was found in the pyramidal cortical neurons, large brain stem neurons and cerebellar Purkinje cells. All three isoforms were found in all the tissues except skeletal muscle where only isoform 1 was found.

It is found in the cytoplasm. Involved in EGFR trafficking, acting as negative regulator of endocytic EGFR internalization at the plasma membrane. The protein is Ataxin-2 (Atxn2) of Mus musculus (Mouse).